The chain runs to 402 residues: MRLNYLPSEFQKALPILKKIKKAGYEAYFVGGSVRDVLLDRPIHDVDIATSSYPEETKQIFKRTVDVGIEHGTVLVLEKGGEYEITTFRTEEVYVDYRRPSQVNFVRSLEEDLKRRDFTVNAFALNEDGEVIDLFHGLDDLDNHLLRAVGLASERFNEDALRIMRGLRFSASLNFDIETTTFEAMKKHASLLEKISVERSFIEFDKLLLAPYWRKGMLALIDSHAFNYLPCLKNRELQLSAFLSQLDKDFLFETSEQAWASLILSMEVEHTKTFLKKWKTSTHFQKDVEHIVDVYRIREQMGLTKEHLYRYGKTIIKQAEGIRKARGLMVDFEKIEQLDSELAIHDRHEIVVNGGTLIKKLGIKPGPQMGDIISQIELAIVLGQLINEEEAILHFVKQYLMD.

ATP contacts are provided by G32 and R35. G32 and R35 together coordinate CTP. Mg(2+)-binding residues include D45 and D47. ATP-binding residues include R116, D159, R162, R165, and R168. The CTP site is built by R116, D159, R162, R165, and R168.

Belongs to the tRNA nucleotidyltransferase/poly(A) polymerase family. Bacterial CCA-adding enzyme type 3 subfamily. As to quaternary structure, homodimer. Mg(2+) serves as cofactor.

The enzyme catalyses a tRNA precursor + 2 CTP + ATP = a tRNA with a 3' CCA end + 3 diphosphate. It carries out the reaction a tRNA with a 3' CCA end + 2 CTP + ATP = a tRNA with a 3' CCACCA end + 3 diphosphate. Functionally, catalyzes the addition and repair of the essential 3'-terminal CCA sequence in tRNAs without using a nucleic acid template. Adds these three nucleotides in the order of C, C, and A to the tRNA nucleotide-73, using CTP and ATP as substrates and producing inorganic pyrophosphate. tRNA 3'-terminal CCA addition is required both for tRNA processing and repair. Also involved in tRNA surveillance by mediating tandem CCA addition to generate a CCACCA at the 3' terminus of unstable tRNAs. While stable tRNAs receive only 3'-terminal CCA, unstable tRNAs are marked with CCACCA and rapidly degraded. In Streptococcus agalactiae serotype III (strain NEM316), this protein is CCA-adding enzyme.